We begin with the raw amino-acid sequence, 402 residues long: Sex hormone-binding globulin (402 aa).

A signal peptide spans M1–A29. T36 is a glycosylation site (O-linked (GalNAc...) threonine). Laminin G-like domains are found at residues V45–C217 and G224–C390. 2 cysteine pairs are disulfide-bonded: C193/C217 and C362/C390. N-linked (GlcNAc...) asparagine glycosylation is found at N380 and N396.

As to quaternary structure, homodimer. Post-translationally, variant Asn-356 contains one N-linked (GlcNAc...) at position 356. As to expression, isoform 1 and isoform 2 are present in liver and testis.

The protein resides in the secreted. In terms of biological role, functions as an androgen transport protein, but may also be involved in receptor mediated processes. Each dimer binds one molecule of steroid. Specific for 5-alpha-dihydrotestosterone, testosterone, and 17-beta-estradiol. Regulates the plasma metabolic clearance rate of steroid hormones by controlling their plasma concentration. This is Sex hormone-binding globulin from Homo sapiens (Human).